The sequence spans 179 residues: MTRLKEIYKNEIMAGMQKKFGYKNEMQIPKLDKIVINMGVGEAKDNAKALEAAVKDMEIIAGQKAVITKARKSVANFKLREGVAIGCKVTLRGEKMYEFADRLINLALPRVRDFRGVNPNAFDGRGNYALGVKEQLIFPEIEYDKVDKVRGMDVIFVTTAKTDEEARELLTLFGMPFSK.

It belongs to the universal ribosomal protein uL5 family. In terms of assembly, part of the 50S ribosomal subunit; part of the 5S rRNA/L5/L18/L25 subcomplex. Contacts the 5S rRNA and the P site tRNA. Forms a bridge to the 30S subunit in the 70S ribosome.

In terms of biological role, this is one of the proteins that bind and probably mediate the attachment of the 5S RNA into the large ribosomal subunit, where it forms part of the central protuberance. In the 70S ribosome it contacts protein S13 of the 30S subunit (bridge B1b), connecting the 2 subunits; this bridge is implicated in subunit movement. Contacts the P site tRNA; the 5S rRNA and some of its associated proteins might help stabilize positioning of ribosome-bound tRNAs. This chain is Large ribosomal subunit protein uL5, found in Lachnoclostridium phytofermentans (strain ATCC 700394 / DSM 18823 / ISDg) (Clostridium phytofermentans).